A 210-amino-acid chain; its full sequence is Chloramphenicol acetyltransferase (210 aa).

Residue His79 is part of the active site.

Belongs to the transferase hexapeptide repeat family.

The catalysed reaction is chloramphenicol + acetyl-CoA = chloramphenicol 3-acetate + CoA. Its function is as follows. This enzyme is an effector of chloramphenicol resistance in bacteria. The sequence is that of Chloramphenicol acetyltransferase (catB2) from Escherichia coli.